We begin with the raw amino-acid sequence, 982 residues long: Protein cramped (982 aa).

Disordered regions lie at residues 1–37, 71–111, 323–349, 407–456, and 822–851; these read MEELSKQPPPPPLTQPPPPSSSVSIEEPLPNGKGGGA, QKMK…GSGK, SLPSAASNNNNNNNETEPLQPSVASLD, NKRL…SSGD, and GTSSAGISTSGSKPDCSMNAMTASQDQEPG. Pro residues predominate over residues 7 to 20; the sequence is QPPPPPLTQPPPPS. Over residues 21–30 the composition is skewed to low complexity; the sequence is SSVSIEEPLP. Basic and acidic residues predominate over residues 86–98; sequence SEREPNKKEEKAA. A compositionally biased stretch (polar residues) spans 100–111; that stretch reads KTPSQLKTGSGK. Positions 109 to 173 constitute an SANT domain; it reads SGKTTWTNVE…HYYQTHHKIC (65 aa). Residues 410–425 show a composition bias toward basic and acidic residues; that stretch reads LRTESGSEKRSPETKK. Residues S431 and S437 each carry the phosphoserine modification. Positions 822–833 are enriched in low complexity; it reads GTSSAGISTSGS.

The protein belongs to the cramped family. As to expression, ubiquitously expressed throughout embryonic development. High expression is detected in CNS and gonads.

The protein localises to the nucleus. In terms of biological role, polycomb group (Pc-G) genes are needed to maintain expression patterns of the homeotic selector genes of the Antennapedia (Antp-C) and Bithorax (Bx-C) complexes, and hence for the maintenance of segmental determination. Can act as a modifier of position effect variegation (PEV). The sequence is that of Protein cramped (crm) from Drosophila melanogaster (Fruit fly).